The chain runs to 92 residues: UPF0250 protein XCC3453 (92 aa).

It belongs to the UPF0250 family.

This Xanthomonas campestris pv. campestris (strain ATCC 33913 / DSM 3586 / NCPPB 528 / LMG 568 / P 25) protein is UPF0250 protein XCC3453.